The primary structure comprises 187 residues: Small ribosomal subunit protein uS5 (187 aa).

The interval 1 to 20 (MAERENRRDRRDDRSREETP) is disordered. An S5 DRBM domain is found at 22 to 85 (FADRLVAINR…EQAKRQMIRV (64 aa)). The disordered stretch occupies residues 154–174 (DGLKRESSPRQVAQRRGKKVA).

This sequence belongs to the universal ribosomal protein uS5 family. In terms of assembly, part of the 30S ribosomal subunit. Contacts proteins S4 and S8.

In terms of biological role, with S4 and S12 plays an important role in translational accuracy. Functionally, located at the back of the 30S subunit body where it stabilizes the conformation of the head with respect to the body. This Cereibacter sphaeroides (strain ATCC 17025 / ATH 2.4.3) (Rhodobacter sphaeroides) protein is Small ribosomal subunit protein uS5.